Consider the following 367-residue polypeptide: Dihydroorotate dehydrogenase (quinone) (367 aa).

FMN-binding positions include 67–71 (AGFDK) and threonine 91. A substrate-binding site is contributed by lysine 71. Substrate is bound at residue 116–120 (NRLGF). Residues asparagine 145 and asparagine 178 each contribute to the FMN site. Asparagine 178 lines the substrate pocket. Serine 181 functions as the Nucleophile in the catalytic mechanism. Asparagine 183 provides a ligand contact to substrate. FMN contacts are provided by lysine 219 and threonine 247. Substrate is bound at residue 248–249 (NT). Residues glycine 269, glycine 298, and 319–320 (YT) contribute to the FMN site.

This sequence belongs to the dihydroorotate dehydrogenase family. Type 2 subfamily. Monomer. Requires FMN as cofactor.

The protein localises to the cell membrane. It catalyses the reaction (S)-dihydroorotate + a quinone = orotate + a quinol. The protein operates within pyrimidine metabolism; UMP biosynthesis via de novo pathway; orotate from (S)-dihydroorotate (quinone route): step 1/1. Its function is as follows. Catalyzes the conversion of dihydroorotate to orotate with quinone as electron acceptor. The polypeptide is Dihydroorotate dehydrogenase (quinone) (Roseiflexus castenholzii (strain DSM 13941 / HLO8)).